Consider the following 647-residue polypeptide: MFALDSIVGKHINYALDKTQHLPNKINNSITNTEIILQDYQYFASRIFIGLKNLNSMLLFWDTGTGKTLTAVYIIKYIKELFPRWIILIFIKKSLYVDPWLNTISSYISDTSNIKFIYYDSTSSLDKFNNIYRSIESSLNKKNRLLIIIDEVHKLISRSVKKDNSERNFTPIYRKLIKLANYENNKILCMSATPITNNIAEFNNLIGLLRPNVMNIKEEYINNGKLINFKEIRETLLGICSYKRLIEADSLTDTNYIDGYAKKSIFYHNIIMSDEQSKLYNMAERYDYKTELGGLKTMRRLISSFAFYDLKIKGDLDNVEYNEMIKRKLAEFSEFTKNINFSKEFINAFKNNEIKTKTDLLITDINNYNILYQYSCKYIEACRIILNSRGKVLLFEPLVNFEGISSLKYYFNCFNISYIEYSSKTIKMRDNDLNYYNNYENNDGNKIKVCIFSYAGSEGISFKCINDIIILDMPWNESELKQIIGRSIRLNSHEYLPINYRYVNVHFIISYSNNRKSVDKEILDIIKNKQGKINVVFDLLKASPIEIIHNMYKYIEPVDNEIIFETIRKTRMKEMNISNVIINLKLYPITYCKDYDRATILKGLLNKDTNIIYDNDTPVAILLVDNNNLPIFVIENDILIYITNDYY.

Positions 48-212 (FIGLKNLNSM…NNLIGLLRPN (165 aa)) constitute a Helicase ATP-binding domain. 61 to 68 (WDTGTGKT) contacts ATP. A DEXH box motif is present at residues 150–153 (DEVH). In terms of domain architecture, Helicase C-terminal spans 378-541 (YIEACRIILN…KINVVFDLLK (164 aa)). The binding to the cap-specific mRNA (nucleoside-2'-O-)-methyltransferase stretch occupies residues 467–533 (DIIILDMPWN…DIIKNKQGKI (67 aa)).

It belongs to the helicase family. NPH I subfamily. In terms of assembly, monomer. Interacts (via C-terminus) with RAP94 (via N-terminus). Interacts with the cap-specific mRNA (nucleoside-2'-O-)-methyltransferase.

The protein resides in the virion. The catalysed reaction is a ribonucleoside 5'-triphosphate + H2O = a ribonucleoside 5'-diphosphate + phosphate + H(+). In terms of biological role, DNA-dependent ATPase required for providing the needed energy to achieve the termination of early transcripts. Acts in concert with the RAP94 subunit of the virion RNA polymerase and the capping enzyme/VTF to catalyze release of UUUUUNU-containing nascent RNA from the elongation complex. NPH-I must bind ssDNA in order to exhibit ATPase activity. This chain is Nucleoside triphosphatase I (NPH1), found in Choristoneura fumiferana (Spruce budworm moth).